The following is a 105-amino-acid chain: NADH-quinone oxidoreductase subunit K (105 aa).

3 helical membrane passes run 9–29, 34–54, and 65–85; these read PNYYLVLAAVLFTIGAAGVLV, IVLFMCVELMLNAANLTLVTF, and IMAFFVMVVAAAEVVVGLAII.

Belongs to the complex I subunit 4L family. As to quaternary structure, NDH-1 is composed of 14 different subunits. Subunits NuoA, H, J, K, L, M, N constitute the membrane sector of the complex.

It is found in the cell membrane. It catalyses the reaction a quinone + NADH + 5 H(+)(in) = a quinol + NAD(+) + 4 H(+)(out). Its function is as follows. NDH-1 shuttles electrons from NADH, via FMN and iron-sulfur (Fe-S) centers, to quinones in the respiratory chain. The immediate electron acceptor for the enzyme in this species is believed to be a menaquinone. Couples the redox reaction to proton translocation (for every two electrons transferred, four hydrogen ions are translocated across the cytoplasmic membrane), and thus conserves the redox energy in a proton gradient. The protein is NADH-quinone oxidoreductase subunit K of Salinispora tropica (strain ATCC BAA-916 / DSM 44818 / JCM 13857 / NBRC 105044 / CNB-440).